Here is a 356-residue protein sequence, read N- to C-terminus: Probable dual-specificity RNA methyltransferase RlmN (356 aa).

The Proton acceptor role is filled by E97. In terms of domain architecture, Radical SAM core spans 103 to 333 (YHHGNSVCIS…VTIRREMGSD (231 aa)). C110 and C338 are joined by a disulfide. [4Fe-4S] cluster-binding residues include C117, C121, and C124. S-adenosyl-L-methionine-binding positions include 164 to 165 (GE), S196, 219 to 221 (SLH), and N295. C338 (S-methylcysteine intermediate) is an active-site residue.

The protein belongs to the radical SAM superfamily. RlmN family. [4Fe-4S] cluster is required as a cofactor.

Its subcellular location is the cytoplasm. It carries out the reaction adenosine(2503) in 23S rRNA + 2 reduced [2Fe-2S]-[ferredoxin] + 2 S-adenosyl-L-methionine = 2-methyladenosine(2503) in 23S rRNA + 5'-deoxyadenosine + L-methionine + 2 oxidized [2Fe-2S]-[ferredoxin] + S-adenosyl-L-homocysteine. The enzyme catalyses adenosine(37) in tRNA + 2 reduced [2Fe-2S]-[ferredoxin] + 2 S-adenosyl-L-methionine = 2-methyladenosine(37) in tRNA + 5'-deoxyadenosine + L-methionine + 2 oxidized [2Fe-2S]-[ferredoxin] + S-adenosyl-L-homocysteine. Functionally, specifically methylates position 2 of adenine 2503 in 23S rRNA and position 2 of adenine 37 in tRNAs. The chain is Probable dual-specificity RNA methyltransferase RlmN from Lachnoclostridium phytofermentans (strain ATCC 700394 / DSM 18823 / ISDg) (Clostridium phytofermentans).